Reading from the N-terminus, the 338-residue chain is Nicotinate-nucleotide--dimethylbenzimidazole phosphoribosyltransferase (338 aa).

The active-site Proton acceptor is glutamate 305.

The protein belongs to the CobT family.

The enzyme catalyses 5,6-dimethylbenzimidazole + nicotinate beta-D-ribonucleotide = alpha-ribazole 5'-phosphate + nicotinate + H(+). Its pathway is nucleoside biosynthesis; alpha-ribazole biosynthesis; alpha-ribazole from 5,6-dimethylbenzimidazole: step 1/2. Functionally, catalyzes the synthesis of alpha-ribazole-5'-phosphate from nicotinate mononucleotide (NAMN) and 5,6-dimethylbenzimidazole (DMB). This is Nicotinate-nucleotide--dimethylbenzimidazole phosphoribosyltransferase from Rhizobium meliloti (strain 1021) (Ensifer meliloti).